The chain runs to 175 residues: ADP-ribosylation factor 6 (175 aa).

The N-myristoyl glycine moiety is linked to residue Gly-2. A lipid anchor (N6-myristoyl lysine) is attached at Lys-3. GTP is bound by residues 23-28 (AAGKTT), 41-44 (TIPT), 63-67 (DVGGQ), 122-125 (NKQD), and 155-156 (CA).

Belongs to the small GTPase superfamily. Arf family. As to quaternary structure, interacts (when activated) with GGA1, GGA2 and GGA3; the interaction is required for proper subcellular location of GGA1, GGA2 and GGA3. Interacts with PIP5K1C. Interacts with USP6 (via Rab-GAP TBC domain). Interacts with RAB11FIP3 and RAB11FIP4. Interacts with HERC1. Interacts with ARHGAP21. Interacts with ASAP3; the interaction is stabilized by calcium ions. Interacts with NCS1/FREQ at the plasma membrane. Interacts with TBC1D24. Interacts with ECPAS. Interacts with MICALL1. Interacts with SPAG9 homodimers, forming heterotetramers. Interacts with CYTH3. Interacts with ASAP2. Interacts with UACA. Interacts with KIF23, forming heterodimers and heterotetramers. Interacts with C9orf72. Interacts (GTP-bound form) with TJAP1/PILT. Interacts with PRKAA2. Interacts with CD36 (when palmitoylated); this interaction mediates CD36 transport from the Golgi to the plasma membrane. Interacts with APBB1. (Microbial infection) Interacts with the V.cholerae enterotoxin subunit A1; this causes a conformation change so that the toxin can bind NAD and catalyze the ADP-ribosylation of Gs alpha. In terms of assembly, (Microbial infection) Interacts with EspG from enteropathogenic E.coli. As to quaternary structure, (Microbial infection) Identified in a complex with RAB1A and EspG from enteropathogenic E.coli. (Microbial infection) Interacts with human enterovirus 71 protein VP1. In terms of processing, GTP-bound form is myristoylated on Lys-3 by NMT1 and NMT2, allowing ARF6 to remain on membranes during the GTPase cycle, thereby promoting its activity. GDP-bound inactive form is demyristoylated on Lys-3 by SIRT2 at early endosomes or endocytic recycling compartment to allow its efficient activation by a guanine exchange factor (GEF) after GDP release. As to expression, ubiquitous, with higher levels in heart, substantia nigra, and kidney.

It localises to the cytoplasm. The protein resides in the cytosol. It is found in the cell membrane. Its subcellular location is the endosome membrane. The protein localises to the recycling endosome membrane. It localises to the cell projection. The protein resides in the filopodium membrane. It is found in the ruffle. Its subcellular location is the cleavage furrow. The protein localises to the midbody. It localises to the midbody ring. The protein resides in the early endosome membrane. It is found in the golgi apparatus. Its subcellular location is the trans-Golgi network membrane. The catalysed reaction is GTP + H2O = GDP + phosphate + H(+). With respect to regulation, activation is generally mediated by a guanine exchange factor (GEF), while inactivation through hydrolysis of bound GTP is catalyzed by a GTPase activating protein (GAP). Activated by ASAP3. Inactivated by ACAP1 and ACAP2. Activated by NGF via NTRK1. Activated by PRKAA2 through its C-terminal regulatory domain. Its function is as follows. GTP-binding protein involved in protein trafficking that regulates endocytic recycling and cytoskeleton remodeling. GTP-bound form plays an important role in the transport of multiple palmitoylated proteins form the Golgi to the plasma membrane. Required for normal completion of mitotic cytokinesis. Plays a role in the reorganization of the actin cytoskeleton and the formation of stress fibers. Involved in the regulation of dendritic spine development, contributing to the regulation of dendritic branching and filopodia extension. Potentiates the neurite outgrowth in primary neurons by interacting with the molecular adapter APBB1. Plays an important role in membrane trafficking, during junctional remodeling and epithelial polarization. Regulates surface levels of adherens junction proteins such as CDH1. Required for NTRK1 sorting to the recycling pathway from early endosomes. (Microbial infection) Functions as an allosteric activator of the cholera toxin catalytic subunit, an ADP-ribosyltransferase. Functionally, (Microbial infection) Plays a key role in the endocytosis of enterovirus 71 and thus viral entry into brain microvascular endothelial cells. The polypeptide is ADP-ribosylation factor 6 (Homo sapiens (Human)).